The primary structure comprises 212 residues: Large ribosomal subunit protein uL3 (212 aa).

Glutamine 153 is modified (N5-methylglutamine).

Belongs to the universal ribosomal protein uL3 family. As to quaternary structure, part of the 50S ribosomal subunit. Forms a cluster with proteins L14 and L19. Methylated by PrmB.

Its function is as follows. One of the primary rRNA binding proteins, it binds directly near the 3'-end of the 23S rRNA, where it nucleates assembly of the 50S subunit. The protein is Large ribosomal subunit protein uL3 of Shewanella pealeana (strain ATCC 700345 / ANG-SQ1).